The primary structure comprises 548 residues: GLC7-interacting protein 2 (548 aa).

Basic and acidic residues predominate over residues 1-23 (MYIKAEQKPQQFERKNEKLDRNK). Disordered regions lie at residues 1–54 (MYIK…STEE) and 118–143 (VESL…STVP). Position 51 is a phosphoserine (S51). T52 carries the phosphothreonine modification. Position 155 is a phosphoserine (S155). Residues 191–212 (RSKSLPTTPGIRSGNGVQARDG) form a disordered region. S221 and S238 each carry phosphoserine. Residues 293 to 346 (FAHPAKISNPNNGKGTNNTKLRKSKRFQNLLKNRTDMPPSKSNKKFVNGGGAHE) form a disordered region. Residues 419 to 534 (HNGNDCNGVA…NNNGNNYKVD (116 aa)) enclose the CBM21 domain.

Interacts with phosphatase 1 (GLC7).

This Saccharomyces cerevisiae (strain ATCC 204508 / S288c) (Baker's yeast) protein is GLC7-interacting protein 2 (GIP2).